The sequence spans 1212 residues: uncharacterized protein (1212 aa).

Positions 783–802 (TRQDASGGSSSGTKKGEKLQ) are disordered.

This is an uncharacterized protein from Human herpesvirus 6B (strain Z29) (HHV-6 variant B).